Reading from the N-terminus, the 1197-residue chain is Disease resistance-like protein CSA1 (1197 aa).

The TIR domain maps to 15–178; sequence PQDQVFINFR…IIIRKVKEIL (164 aa). Glu89 is an active-site residue. Residues 210-480 form the NB-ARC domain; sequence RIKQLEEKLR…ACFRSQDENY (271 aa). 10 LRR repeats span residues 614 to 636, 638 to 659, 694 to 716, 728 to 749, 750 to 774, 776 to 796, 797 to 819, 820 to 843, 845 to 862, and 863 to 889; these read LNEV…DFNP, NLVD…NKDA, TALK…NLRG, LISL…QVIS, DKLE…RLQR, VMLN…LGQL, KALE…TWGN, MSRL…LSVR, LCLN…LLNK, and FSQL…NLQY.

It carries out the reaction NAD(+) + H2O = ADP-D-ribose + nicotinamide + H(+). TIR-NB-LRR receptor-like protein that functions in photomorphogenic development. May function downstream of phytochrome B (phyB) signaling. This Arabidopsis thaliana (Mouse-ear cress) protein is Disease resistance-like protein CSA1.